A 359-amino-acid chain; its full sequence is 3-isopropylmalate dehydrogenase (359 aa).

Gly-74–Glu-85 is an NAD(+) binding site. Arg-92, Arg-102, Arg-131, and Asp-220 together coordinate substrate. Residues Asp-220, Asp-245, and Asp-249 each coordinate Mg(2+). Gly-284–Asn-295 contributes to the NAD(+) binding site.

Belongs to the isocitrate and isopropylmalate dehydrogenases family. As to quaternary structure, homodimer. Mg(2+) serves as cofactor. Requires Mn(2+) as cofactor.

Its subcellular location is the cytoplasm. The enzyme catalyses (2R,3S)-3-isopropylmalate + NAD(+) = 4-methyl-2-oxopentanoate + CO2 + NADH. Its pathway is amino-acid biosynthesis; L-leucine biosynthesis; L-leucine from 3-methyl-2-oxobutanoate: step 3/4. Functionally, catalyzes the oxidation of 3-carboxy-2-hydroxy-4-methylpentanoate (3-isopropylmalate) to 3-carboxy-4-methyl-2-oxopentanoate. The product decarboxylates to 4-methyl-2 oxopentanoate. The chain is 3-isopropylmalate dehydrogenase (LEU2) from Kluyveromyces marxianus (Yeast).